The primary structure comprises 262 residues: Phosphate import ATP-binding protein PstB (262 aa).

Residues 16–257 (IDVRNLNFYY…PHRKETEDYI (242 aa)) enclose the ABC transporter domain. 48-55 (GPSGCGKS) provides a ligand contact to ATP.

It belongs to the ABC transporter superfamily. Phosphate importer (TC 3.A.1.7) family. In terms of assembly, the complex is composed of two ATP-binding proteins (PstB), two transmembrane proteins (PstC and PstA) and a solute-binding protein (PstS).

It is found in the cell inner membrane. The catalysed reaction is phosphate(out) + ATP + H2O = ADP + 2 phosphate(in) + H(+). In terms of biological role, part of the ABC transporter complex PstSACB involved in phosphate import. Responsible for energy coupling to the transport system. The protein is Phosphate import ATP-binding protein PstB of Cupriavidus metallidurans (strain ATCC 43123 / DSM 2839 / NBRC 102507 / CH34) (Ralstonia metallidurans).